A 338-amino-acid chain; its full sequence is NADH-quinone oxidoreductase subunit H (338 aa).

Helical transmembrane passes span 22-42 (VVQA…MSFI), 96-116 (VAMA…ALGV), 121-141 (IGLL…LFGG), 161-181 (ISYE…AGSF), 193-213 (VWFI…GVAV), 249-269 (YVNV…GWLA), 277-297 (FVPP…MFVL), and 315-335 (WKIC…VILM).

It belongs to the complex I subunit 1 family. As to quaternary structure, NDH-1 is composed of 14 different subunits. Subunits NuoA, H, J, K, L, M, N constitute the membrane sector of the complex.

The protein localises to the cell inner membrane. The enzyme catalyses a quinone + NADH + 5 H(+)(in) = a quinol + NAD(+) + 4 H(+)(out). Functionally, NDH-1 shuttles electrons from NADH, via FMN and iron-sulfur (Fe-S) centers, to quinones in the respiratory chain. The immediate electron acceptor for the enzyme in this species is believed to be ubiquinone. Couples the redox reaction to proton translocation (for every two electrons transferred, four hydrogen ions are translocated across the cytoplasmic membrane), and thus conserves the redox energy in a proton gradient. This subunit may bind ubiquinone. This chain is NADH-quinone oxidoreductase subunit H, found in Acinetobacter baumannii (strain ATCC 17978 / DSM 105126 / CIP 53.77 / LMG 1025 / NCDC KC755 / 5377).